The sequence spans 181 residues: Peptidyl-tRNA hydrolase (181 aa).

Y14 provides a ligand contact to tRNA. The active-site Proton acceptor is the H19. Positions 62, 64, and 108 each coordinate tRNA.

It belongs to the PTH family. As to quaternary structure, monomer.

The protein resides in the cytoplasm. The enzyme catalyses an N-acyl-L-alpha-aminoacyl-tRNA + H2O = an N-acyl-L-amino acid + a tRNA + H(+). In terms of biological role, hydrolyzes ribosome-free peptidyl-tRNAs (with 1 or more amino acids incorporated), which drop off the ribosome during protein synthesis, or as a result of ribosome stalling. Catalyzes the release of premature peptidyl moieties from peptidyl-tRNA molecules trapped in stalled 50S ribosomal subunits, and thus maintains levels of free tRNAs and 50S ribosomes. The polypeptide is Peptidyl-tRNA hydrolase (Campylobacter jejuni subsp. jejuni serotype O:23/36 (strain 81-176)).